Reading from the N-terminus, the 100-residue chain is NAD(P)H-quinone oxidoreductase subunit 4L, chloroplastic (100 aa).

3 helical membrane passes run 1–21, 31–51, and 60–80; these read MLEHVLIISAYLFSIGIYGLI, MCLELILNAVNMNFVTFSDFF, and IFSIFVIAIAAAEAAIGPAIL.

It belongs to the complex I subunit 4L family. In terms of assembly, NDH is composed of at least 16 different subunits, 5 of which are encoded in the nucleus.

It is found in the plastid. Its subcellular location is the chloroplast thylakoid membrane. It carries out the reaction a plastoquinone + NADH + (n+1) H(+)(in) = a plastoquinol + NAD(+) + n H(+)(out). The catalysed reaction is a plastoquinone + NADPH + (n+1) H(+)(in) = a plastoquinol + NADP(+) + n H(+)(out). In terms of biological role, NDH shuttles electrons from NAD(P)H:plastoquinone, via FMN and iron-sulfur (Fe-S) centers, to quinones in the photosynthetic chain and possibly in a chloroplast respiratory chain. The immediate electron acceptor for the enzyme in this species is believed to be plastoquinone. Couples the redox reaction to proton translocation, and thus conserves the redox energy in a proton gradient. In Cucumis sativus (Cucumber), this protein is NAD(P)H-quinone oxidoreductase subunit 4L, chloroplastic.